A 659-amino-acid polypeptide reads, in one-letter code: 1,4-alpha-glucan branching enzyme GlgB (659 aa).

The segment covering 1 to 12 (MRNCKELKHEKN) has biased composition (basic and acidic residues). The segment at 1–25 (MRNCKELKHEKNGNVTEKIGKNKGK) is disordered. Catalysis depends on D337, which acts as the Nucleophile. E390 serves as the catalytic Proton donor.

It belongs to the glycosyl hydrolase 13 family. GlgB subfamily. In terms of assembly, monomer.

The enzyme catalyses Transfers a segment of a (1-&gt;4)-alpha-D-glucan chain to a primary hydroxy group in a similar glucan chain.. It participates in glycan biosynthesis; glycogen biosynthesis. Catalyzes the formation of the alpha-1,6-glucosidic linkages in glycogen by scission of a 1,4-alpha-linked oligosaccharide from growing alpha-1,4-glucan chains and the subsequent attachment of the oligosaccharide to the alpha-1,6 position. This is 1,4-alpha-glucan branching enzyme GlgB from Clostridium perfringens (strain ATCC 13124 / DSM 756 / JCM 1290 / NCIMB 6125 / NCTC 8237 / Type A).